We begin with the raw amino-acid sequence, 822 residues long: Probable alpha,alpha-trehalose-phosphate synthase [UDP-forming] 2 (822 aa).

Residues 12–479 (PRLLVVANRL…GLDFMSELNG (468 aa)) form a glycosyltransferase region.

This sequence in the N-terminal section; belongs to the glycosyltransferase 20 family. The protein in the C-terminal section; belongs to the trehalose phosphatase family.

It carries out the reaction D-glucose 6-phosphate + UDP-alpha-D-glucose = alpha,alpha-trehalose 6-phosphate + UDP + H(+). The chain is Probable alpha,alpha-trehalose-phosphate synthase [UDP-forming] 2 (TPS2) from Arabidopsis thaliana (Mouse-ear cress).